Here is a 739-residue protein sequence, read N- to C-terminus: MATDDSIIVLDDDDEDEAAAQPGPSNLPPNPASTGPGPGLSQQATGLSEPRVDGGSSNSGSRKCYKLDNEKLFEEFLELCKTETSDHPEVVPFLHKLQQRAQSVFLASAEFCNILSRVLARSRKRPAKIYVYINELCTVLKAHSIKKKLNLAPAASTTSEASGPNPPTEPPSDLTNTENTASEASRTRGSRRQIQRLEQLLALYVAEIRRLQEKELDLSELDDPDSSYLQEARLKRKLIRLFGRLCELKDCSSLTGRVIEQRIPYRGTRYPEVNRRIERLINKPGLDTFPDYGDVLRAVEKAATRHSLGLPRQQLQLLAQDAFRDVGVRLQERRHLDLIYNFGCHLTDDYRPGVDPALSDPTLARRLRENRTLAMNRLDEVISKYAMMQDKTEEGERQKRRARLLGTAPQPSDPPQASSESGEGPSGMASQECPTTSKAETDDDDDDDDDDDEDNEESEEEEEEEEEEKEATEDEDEDLEQLQEDQGGDEEEEGGDNEGNESPTSPSDFFHRRNSEPAEGLRTPEGQQKRGLTETPASPPGASLDPPSTDAESSGEQLLEPLLGDESPVSQLAELEMEALPEERDISSPRKKSEDSLPTILENGAAVVTSTSVNGRVSSHTWRDASPPSKRFRKEKKQLGSGLLGNSYIKEPMAQQDSGQNTSVQPMPSPPLASVASVADSSTRVDSPSHELVTSSLCSPSPSLLLQTPQAQSLRQCIYKTSVATQCDPEEIIVLSDSD.

The segment at 1-60 (MATDDSIIVLDDDDEDEAAAQPGPSNLPPNPASTGPGPGLSQQATGLSEPRVDGGSSNSG) is disordered. A necessary for interaction with USP7 and ATRX region spans residues 1–166 (MATDDSIIVL…TTSEASGPNP (166 aa)). A Phosphoserine modification is found at Ser-25. Lys-148 participates in a covalent cross-link: Glycyl lysine isopeptide (Lys-Gly) (interchain with G-Cter in SUMO2). Residues 155–191 (ASTTSEASGPNPPTEPPSDLTNTENTASEASRTRGSR) form a disordered region. The segment covering 173-184 (DLTNTENTASEA) has biased composition (polar residues). Coiled-coil stretches lie at residues 185 to 223 (SRTRGSRRQIQRLEQLLALYVAEIRRLQEKELDLSELDD) and 364 to 403 (ARRLRENRTLAMNRLDEVISKYAMMQDKTEEGERQKRRAR). An interaction with histone H3.3 region spans residues 189–423 (GSRRQIQRLE…PPQASSESGE (235 aa)). A Phosphoserine modification is found at Ser-219. Residues 353-576 (GVDPALSDPT…SPVSQLAELE (224 aa)) form a necessary for interaction with USP7 region. The short motif at 391-395 (KTEEG) is the Nuclear localization signal element. 2 disordered regions span residues 405-599 (LGTA…SLPT) and 611-688 (TSVN…VDSP). Phosphoserine occurs at positions 418 and 430. Residues 441 to 499 (TDDDDDDDDDDDEDNEESEEEEEEEEEEKEATEDEDEDLEQLQEDQGGDEEEEGGDNEG) are compositionally biased toward acidic residues. Positions 445 to 488 (DDDDDDDDEDNEESEEEEEEEEEEKEATEDEDEDLEQLQEDQGG) form a coiled coil. A Phosphothreonine modification is found at Thr-472. 4 positions are modified to phosphoserine: Ser-502, Ser-505, Ser-507, and Ser-515. Phosphothreonine is present on Thr-523. Phosphoserine is present on residues Ser-543 and Ser-567. Residues 581–595 (PEERDISSPRKKSED) are compositionally biased toward basic and acidic residues. Positions 611 to 620 (TSVNGRVSSH) are enriched in polar residues. The short motif at 622–628 (WRDASPP) is the Nuclear localization signal element. Residue Ser-626 is modified to Phosphoserine. The tract at residues 626–739 (SPPSKRFRKE…EEIIVLSDSD (114 aa)) is interaction with SPOP. Residue Lys-630 forms a Glycyl lysine isopeptide (Lys-Gly) (interchain with G-Cter in SUMO1) linkage. The segment covering 655–666 (QQDSGQNTSVQP) has biased composition (polar residues). Ser-669 carries the phosphoserine; by HIPK1 modification. Ser-687, Ser-701, Ser-736, and Ser-738 each carry phosphoserine. Residues 732 to 739 (IIVLSDSD) form a sumo interaction motif (SIM) region.

This sequence belongs to the DAXX family. Homomultimer. Interacts (via C-terminus) with TNFRSF6 (via death domain). Interacts with PAX5, SLC2A4/GLUT4, MAP3K5, TGFBR2, phosphorylated dimeric HSPB1/HSP27, CENPC, ETS1, sumoylated PML, UBE2I, MCRS1 and TP53. Interacts (via N-terminus) with HIPK2 and HIPK3. Interacts with HIPK1, which induces translocation from PML/POD/ND10 nuclear bodies to chromatin and enhances association with HDAC1. Interacts (non-phosphorylated) with PAX3, PAX7, DEK, HDAC1, HDAC2, HDAC3, acetylated histone H4 and histones H2A, H2B, H3, H3.3 and H4. Interacts with SPOP; mediating CUL3-dependent proteasomal degradation. Interacts with CBP; the interaction is dependent the sumoylation of CBP and suppresses CBP transcriptional activity via recruitment of HDAC2 directly in the complex with TP53 and HIPK2. Interacts with AXIN1; the interaction stimulates the interaction of DAXX with TP53, stimulates 'Ser-46' phosphorylation of TP53 on and induces cell death on UV irradiation. Interacts with MDM2; the interaction is direct. Interacts with USP7; the interaction is direct and independent of MDM2 and TP53. Part of a complex with DAXX, MDM2 and USP7 under non-stress conditions. Interacts (via N-terminus) with RASSF1 (via C-terminus); the interaction is independent of MDM2 and TP53; RASSF1 isoform A disrupts interactions among MDM2, DAXX and USP7, thus contributing to the efficient activation of TP53 by promoting MDM2 self-ubiquitination in cell-cycle checkpoint control in response to DNA damage. Interacts with ATRX to form the chromatin remodeling complex ATRX:DAXX. Interacts with HSF1 (via homotrimeric form preferentially); this interaction relieves homotrimeric HSF1 from repression of its transcriptional activity by HSP90-dependent multichaperone complex upon heat shock. Sumoylated with SUMO1 on multiple lysine residues. In terms of processing, repressor activity is down-regulated upon Ser-669 phosphorylation. Upon neuronal activation dephosphorylated by calcineurin in a Ca2+ dependent manner at Ser-669; dephosphorylation positively affects histone H3.3 loading and transcriptional activation. Post-translationally, polyubiquitinated; which is promoted by CUL3 and SPOP and results in proteasomal degradation. Ubiquitinated by MDM2; inducing its degradation. Deubiquitinated by USP7; leading to stabilize it.

The protein resides in the cytoplasm. The protein localises to the nucleus. It localises to the nucleoplasm. Its subcellular location is the PML body. It is found in the nucleolus. The protein resides in the chromosome. The protein localises to the centromere. In terms of biological role, transcription corepressor known to repress transcriptional potential of several sumoylated transcription factors. Down-regulates basal and activated transcription. Its transcription repressor activity is modulated by recruiting it to subnuclear compartments like the nucleolus or PML/POD/ND10 nuclear bodies through interactions with MCSR1 and PML, respectively. Seems to regulate transcription in PML/POD/ND10 nuclear bodies together with PML and may influence TNFRSF6-dependent apoptosis thereby. Inhibits transcriptional activation of PAX3 and ETS1 through direct protein-protein interactions. Modulates PAX5 activity; the function seems to involve CREBBP. Acts as an adapter protein in a MDM2-DAXX-USP7 complex by regulating the RING-finger E3 ligase MDM2 ubiquitination activity. Under non-stress condition, in association with the deubiquitinating USP7, prevents MDM2 self-ubiquitination and enhances the intrinsic E3 ligase activity of MDM2 towards TP53, thereby promoting TP53 ubiquitination and subsequent proteasomal degradation. Upon DNA damage, its association with MDM2 and USP7 is disrupted, resulting in increased MDM2 autoubiquitination and consequently, MDM2 degradation, which leads to TP53 stabilization. Acts as a histone chaperone that facilitates deposition of histone H3.3. Acts as a targeting component of the chromatin remodeling complex ATRX:DAXX which has ATP-dependent DNA translocase activity and catalyzes the replication-independent deposition of histone H3.3 in pericentric DNA repeats outside S-phase and telomeres, and the in vitro remodeling of H3.3-containing nucleosomes. Does not affect the ATPase activity of ATRX but alleviates its transcription repression activity. Upon neuronal activation associates with regulatory elements of selected immediate early genes where it promotes deposition of histone H3.3 which may be linked to transcriptional induction of these genes. Required for the recruitment of histone H3.3:H4 dimers to PML-nuclear bodies (PML-NBs); the process is independent of ATRX and facilitated by ASF1A; PML-NBs are suggested to function as regulatory sites for the incorporation of newly synthesized histone H3.3 into chromatin. Proposed to mediate activation of the JNK pathway and apoptosis via MAP3K5 in response to signaling from TNFRSF6 and TGFBR2. Interaction with HSPB1/HSP27 may prevent interaction with TNFRSF6 and MAP3K5 and block DAXX-mediated apoptosis. In contrast, in lymphoid cells JNC activation and TNFRSF6-mediated apoptosis may not involve DAXX. Plays a role as a positive regulator of the heat shock transcription factor HSF1 activity during the stress protein response. The sequence is that of Death domain-associated protein 6 (Daxx) from Mus musculus (Mouse).